A 391-amino-acid chain; its full sequence is Zinc finger protein ubi-d4 (391 aa).

Ala-2 carries the post-translational modification N-acetylalanine. Glycyl lysine isopeptide (Lys-Gly) (interchain with G-Cter in SUMO2) cross-links involve residues Lys-10, Lys-99, Lys-107, and Lys-108. Disordered stretches follow at residues 79–147 (WRKK…GEFP) and 165–199 (DDLD…KLDA). 2 stretches are compositionally biased toward basic and acidic residues: residues 100–110 (PDTDQTLKKEG) and 126–140 (DPLE…RVDD). Ser-142 carries the post-translational modification Phosphoserine. The segment covering 165 to 174 (DDLDDEDYEE) has biased composition (acidic residues). Tyr-172 is subject to Phosphotyrosine. Thr-176 is modified (phosphothreonine). Glycyl lysine isopeptide (Lys-Gly) (interchain with G-Cter in SUMO2) cross-links involve residues Lys-178 and Lys-196. Ser-200 is subject to Phosphoserine. Residues 209–232 (YACDICGKRYKNRPGLSYHYAHSH) form a C2H2-type zinc finger. Positions 233-266 (LAEEEGEDKEDSRPPTPVSQRSEEQKSKKGPDGL) are disordered. Ser-244 carries the phosphoserine modification. Residues 253–263 (RSEEQKSKKGP) are compositionally biased toward basic and acidic residues. 2 consecutive PHD-type zinc fingers follow at residues 270–330 (NNYC…CKCC) and 327–377 (CKCC…CLDL). The residue at position 280 (Ser-280) is a Phosphoserine. Lys-281 is covalently cross-linked (Glycyl lysine isopeptide (Lys-Gly) (interchain with G-Cter in SUMO2)).

It belongs to the requiem/DPF family. As to quaternary structure, interacts with the nucleosomes, in particular nucleosomes bearing histone H3 crotonylated at 'Lys-14' (H3K14cr) for which DPF2 has high affinity. Also interacts (via PHD-type zinc finger domains) with histone H3 butyrylated at 'Lys-14' (H3K14bu), histone H3 propionylated at 'Lys-14' (H3K14pr), and histone H3 acetylated at 'Lys-14' (H3K14ac). Interacts with histone H3 acetylated at 'Lys-9' (H3K9ac), histone H3 di-methylated at 'Lys-9' (H3K9me2), and histone H3 tri-methylated at 'Lys-9' (H3K9me3). Interacts with histone H4 acetylated at 'Lys-12' (H4K12ac). Interacts with histone H4 acetylated at 'Lys-16' (H4K16ac). Interacts with SWI/SNF complex components. Interacts with SMARCA2, SMARCA4, SMARCB1 and SMARCD1. Interacts with SMARCC1, SMARCC2 and ACTL6A. Interacts with RUNX1. In embryo, highest levels are seen in brain, eyes, thymus and olfactory epithelium in nose, whereas several other tissues, including the musculoskeletal system, show moderate expression. In adult, higher expression in testis, medium in thymus and spleen, lower in certain parts of the brain as the hippocampus. No expression in adult heart, lung, liver, duodenum and kidney.

It localises to the nucleus. It is found in the cytoplasm. In terms of biological role, plays an active role in transcriptional regulation by binding modified histones H3 and H4. Is a negative regulator of myeloid differentiation of hematopoietic progenitor cells. Might also have a role in the development and maturation of lymphoid cells. Involved in the regulation of non-canonical NF-kappa-B pathway. The chain is Zinc finger protein ubi-d4 (Dpf2) from Mus musculus (Mouse).